Consider the following 278-residue polypeptide: MATH domain and coiled-coil domain-containing protein At1g31400 (278 aa).

Residues 6–131 (EKRITWTIKN…SGQVKIVAEV (126 aa)) form the MATH domain. Positions 232–267 (KLDWLEKKLKEVGKTRMQQLEQNLKDLKESLCWSSD) form a coiled coil.

The sequence is that of MATH domain and coiled-coil domain-containing protein At1g31400 from Arabidopsis thaliana (Mouse-ear cress).